The following is a 108-amino-acid chain: Nucleoid-associated protein BTH_I2220 (108 aa).

The protein belongs to the YbaB/EbfC family. In terms of assembly, homodimer.

It localises to the cytoplasm. It is found in the nucleoid. Functionally, binds to DNA and alters its conformation. May be involved in regulation of gene expression, nucleoid organization and DNA protection. This chain is Nucleoid-associated protein BTH_I2220, found in Burkholderia thailandensis (strain ATCC 700388 / DSM 13276 / CCUG 48851 / CIP 106301 / E264).